Here is a 725-residue protein sequence, read N- to C-terminus: Catalase-peroxidase (725 aa).

Positions 98–226 form a cross-link, tryptophyl-tyrosyl-methioninium (Trp-Tyr) (with M-252); that stretch reads WHMAGSYRTS…LAAVQMGLIY (129 aa). His99 functions as the Proton acceptor in the catalytic mechanism. Positions 226–252 form a cross-link, tryptophyl-tyrosyl-methioninium (Tyr-Met) (with W-98); sequence YVNPEGVNGKSDPQATAYQMRETFARM. His267 is a binding site for heme b.

It belongs to the peroxidase family. Peroxidase/catalase subfamily. Homodimer or homotetramer. It depends on heme b as a cofactor. Formation of the three residue Trp-Tyr-Met cross-link is important for the catalase, but not the peroxidase activity of the enzyme.

The catalysed reaction is H2O2 + AH2 = A + 2 H2O. It catalyses the reaction 2 H2O2 = O2 + 2 H2O. In terms of biological role, bifunctional enzyme with both catalase and broad-spectrum peroxidase activity. This is Catalase-peroxidase from Paracoccus denitrificans (strain Pd 1222).